The chain runs to 356 residues: UDP-N-acetylglucosamine--N-acetylmuramyl-(pentapeptide) pyrophosphoryl-undecaprenol N-acetylglucosamine transferase (356 aa).

Positions 166, 196, and 290 each coordinate UDP-N-acetyl-alpha-D-glucosamine.

The protein belongs to the glycosyltransferase 28 family. MurG subfamily.

Its subcellular location is the cell membrane. The catalysed reaction is Mur2Ac(oyl-L-Ala-gamma-D-Glu-L-Lys-D-Ala-D-Ala)-di-trans,octa-cis-undecaprenyl diphosphate + UDP-N-acetyl-alpha-D-glucosamine = beta-D-GlcNAc-(1-&gt;4)-Mur2Ac(oyl-L-Ala-gamma-D-Glu-L-Lys-D-Ala-D-Ala)-di-trans,octa-cis-undecaprenyl diphosphate + UDP + H(+). It participates in cell wall biogenesis; peptidoglycan biosynthesis. Functionally, cell wall formation. Catalyzes the transfer of a GlcNAc subunit on undecaprenyl-pyrophosphoryl-MurNAc-pentapeptide (lipid intermediate I) to form undecaprenyl-pyrophosphoryl-MurNAc-(pentapeptide)GlcNAc (lipid intermediate II). The polypeptide is UDP-N-acetylglucosamine--N-acetylmuramyl-(pentapeptide) pyrophosphoryl-undecaprenol N-acetylglucosamine transferase (Staphylococcus aureus (strain MW2)).